Reading from the N-terminus, the 232-residue chain is 5'-methylthioadenosine/S-adenosylhomocysteine nucleosidase (232 aa).

Residue E12 is the Proton acceptor of the active site. Residues G78, V153, and M174–E175 each bind substrate. D198 acts as the Proton donor in catalysis.

Belongs to the PNP/UDP phosphorylase family. MtnN subfamily.

It catalyses the reaction S-adenosyl-L-homocysteine + H2O = S-(5-deoxy-D-ribos-5-yl)-L-homocysteine + adenine. It carries out the reaction S-methyl-5'-thioadenosine + H2O = 5-(methylsulfanyl)-D-ribose + adenine. The catalysed reaction is 5'-deoxyadenosine + H2O = 5-deoxy-D-ribose + adenine. It functions in the pathway amino-acid biosynthesis; L-methionine biosynthesis via salvage pathway; S-methyl-5-thio-alpha-D-ribose 1-phosphate from S-methyl-5'-thioadenosine (hydrolase route): step 1/2. Functionally, catalyzes the irreversible cleavage of the glycosidic bond in both 5'-methylthioadenosine (MTA) and S-adenosylhomocysteine (SAH/AdoHcy) to adenine and the corresponding thioribose, 5'-methylthioribose and S-ribosylhomocysteine, respectively. Also cleaves 5'-deoxyadenosine, a toxic by-product of radical S-adenosylmethionine (SAM) enzymes, into 5-deoxyribose and adenine. The polypeptide is 5'-methylthioadenosine/S-adenosylhomocysteine nucleosidase (Photobacterium profundum (strain SS9)).